The primary structure comprises 79 residues: MLELRSLSIRGGIAVLECGRRCISAINLKTGDKIWEFKTEWDIESISIKDNRVMLKCNGRRHIYIDLKTGRKIRELIIL.

This is an uncharacterized protein from Methanocaldococcus jannaschii (strain ATCC 43067 / DSM 2661 / JAL-1 / JCM 10045 / NBRC 100440) (Methanococcus jannaschii).